The following is a 122-amino-acid chain: MIQMQTNLDVADNSGARRVMCIKVLGGSKRRYATIGDIIVVSIKEAIPRGKVKKGDVMKAVVVRVRKDIRRADGSVIRFDRNAAVLINNQSEPVGTRIFGPVPRELRAKNHMKIISLAPEVL.

Belongs to the universal ribosomal protein uL14 family. In terms of assembly, part of the 50S ribosomal subunit. Forms a cluster with proteins L3 and L19. In the 70S ribosome, L14 and L19 interact and together make contacts with the 16S rRNA in bridges B5 and B8.

Its function is as follows. Binds to 23S rRNA. Forms part of two intersubunit bridges in the 70S ribosome. This Bradyrhizobium diazoefficiens (strain JCM 10833 / BCRC 13528 / IAM 13628 / NBRC 14792 / USDA 110) protein is Large ribosomal subunit protein uL14.